We begin with the raw amino-acid sequence, 346 residues long: mRNA endoribonuclease LsoA (346 aa).

As to quaternary structure, can form a complex with cognate antitoxin LsoB and with enterobacteria phage T4 antitoxin Dmd.

Its function is as follows. Toxic component of a type II toxin-antitoxin (TA) system. A stable (half-life over 20 minutes) endoribonuclease that degrades mRNA. Degradation may be translation-stimulated. Overexpression in the absence of cognate antitoxin LsoB causes retarded growth and mRNA degradation, this effect is mitigated upon coexpression with antitoxin LsoB or enterobacteria phage T4 Dmd. Degrades late enterobacteria phage T4 mRNAs, protecting the host against T4 reproduction. This Escherichia coli O157:H7 protein is mRNA endoribonuclease LsoA (lsoA).